The sequence spans 139 residues: ATP synthase epsilon chain (139 aa).

This sequence belongs to the ATPase epsilon chain family. F-type ATPases have 2 components, CF(1) - the catalytic core - and CF(0) - the membrane proton channel. CF(1) has five subunits: alpha(3), beta(3), gamma(1), delta(1), epsilon(1). CF(0) has three main subunits: a, b and c.

It localises to the cell inner membrane. Functionally, produces ATP from ADP in the presence of a proton gradient across the membrane. This Alcanivorax borkumensis (strain ATCC 700651 / DSM 11573 / NCIMB 13689 / SK2) protein is ATP synthase epsilon chain.